Here is a 172-residue protein sequence, read N- to C-terminus: Ribosome maturation factor RimM (172 aa).

The PRC barrel domain occupies 96 to 168 (DGEFYYHEII…RVDVELLEGL (73 aa)).

Belongs to the RimM family. Binds ribosomal protein uS19.

It is found in the cytoplasm. An accessory protein needed during the final step in the assembly of 30S ribosomal subunit, possibly for assembly of the head region. Essential for efficient processing of 16S rRNA. May be needed both before and after RbfA during the maturation of 16S rRNA. It has affinity for free ribosomal 30S subunits but not for 70S ribosomes. This is Ribosome maturation factor RimM from Streptococcus suis (strain 05ZYH33).